A 116-amino-acid chain; its full sequence is Large ribosomal subunit protein bL19 (116 aa).

Belongs to the bacterial ribosomal protein bL19 family.

Functionally, this protein is located at the 30S-50S ribosomal subunit interface and may play a role in the structure and function of the aminoacyl-tRNA binding site. The sequence is that of Large ribosomal subunit protein bL19 from Pseudomonas aeruginosa (strain LESB58).